The primary structure comprises 59 residues: Large ribosomal subunit protein uL30 (59 aa).

The protein belongs to the universal ribosomal protein uL30 family. As to quaternary structure, part of the 50S ribosomal subunit.

The chain is Large ribosomal subunit protein uL30 from Ectopseudomonas mendocina (strain ymp) (Pseudomonas mendocina).